A 461-amino-acid chain; its full sequence is Propanal dehydrogenase (CoA-propanoylating) (461 aa).

A targets protein to the BMC region spans residues 1–18; it reads MNTSELETLIRNILSEQL.

The protein belongs to the EutE/PduP family. In terms of assembly, interacts with PduK, probably with its BMC-containing N-terminus. Interacts with shell proteins PduA and PduJ, interacts with PduQ.

The protein localises to the bacterial microcompartment. It catalyses the reaction propanal + NAD(+) + CoA = propanoyl-CoA + NADH + H(+). It functions in the pathway polyol metabolism; 1,2-propanediol degradation. Functionally, a CoA-acylating aldehyde dehydrogenase required for optimal 1,2-propanediol (1,2-PD) degradation. Optimizes growth in the bacterial microcompartment (BMC) dedicated to 1,2-PD degradation by minimizing propionaldehyde toxicity. NAD(+) and NADH are regenerated internally within the Pdu BMC by the PduP and PduQ enzymes, which reduce NAD(+) and oxidize NADH respectively, although there must also be cofactor transport across the BMC. Directly targeted to the BMC. Expression of a cosmid containing the full 21-gene pdu operon in E.coli allows E.coli to grow on 1,2-propanediol (1,2-PD) with the appearance of bacterial microcompartments (BMC) in its cytoplasm. In terms of biological role, the 1,2-PD-specific bacterial microcompartment (BMC) concentrates low levels of 1,2-PD catabolic enzymes, concentrates volatile reaction intermediates thus enhancing pathway flux and keeps the level of toxic, mutagenic propionaldehyde low. In Citrobacter freundii, this protein is Propanal dehydrogenase (CoA-propanoylating).